Consider the following 2179-residue polypeptide: FRAS1-related extracellular matrix protein 1 (2179 aa).

Positions 1–21 are cleaved as a signal peptide; it reads MNSLSWGAANAVLLLLLLAWA. The short motif at 199-201 is the Cell attachment site element; it reads RGD. CSPG repeat units lie at residues 296–390, 413–500, and 521–615; these read KAAF…LEVY, APRV…FRIF, and PPFL…FVLW. Asparagine 335 is a glycosylation site (N-linked (GlcNAc...) asparagine). N-linked (GlcNAc...) asparagine glycosylation is found at asparagine 560 and asparagine 622. 3 CSPG repeats span residues 642–754, 776–867, and 887–982; these read KEAP…FSVS, QVPE…LEVT, and EPPV…LVVS. The N-linked (GlcNAc...) asparagine glycan is linked to asparagine 1014. CSPG repeat units follow at residues 1024-1126, 1147-1254, 1275-1372, 1393-1485, 1506-1596, and 1628-1724; these read PPSI…VYVT, EAPD…IQLS, KPML…FYLW, GDIV…FIIS, LPVV…FMAT, and PRIT…FQIM. An N-linked (GlcNAc...) asparagine glycan is attached at asparagine 1566. Residues 1731 to 1830 form the Calx-beta domain; that stretch reads ATPQILELKW…DDEVFEVILN (100 aa). The short motif at 1907 to 1909 is the Cell attachment site element; that stretch reads RGD. One can recognise a C-type lectin domain in the interval 2060 to 2174; it reads HSGYCHILIT…CRRAKPHNYV (115 aa). Cysteine 2151 and cysteine 2165 are joined by a disulfide.

This sequence belongs to the FRAS1 family. In terms of assembly, interacts with FREM2.

Its subcellular location is the secreted. It is found in the extracellular space. It localises to the extracellular matrix. The protein localises to the basement membrane. Functionally, extracellular matrix protein that plays a role in epidermal differentiation and is required for epidermal adhesion during embryonic development. The protein is FRAS1-related extracellular matrix protein 1 of Homo sapiens (Human).